The chain runs to 94 residues: MISKRRFSLPRLDITGMWVFSLGVWFHIVARLVYSKPWMAFFLAELIAAILVLFGAYQVLDAWIARVSREEREALEARQQAMMEGQQEGGHVSH.

Helical transmembrane passes span 14 to 34 (ITGM…RLVY) and 37 to 57 (PWMA…FGAY).

In terms of assembly, interacts with pilin.

It localises to the cell inner membrane. Its function is as follows. Required for efficient expression of pilin. Functions as a transient chaperone for propilin, preventing it from being prematurely degraded, and also promotes propilin translocation, positioning it in the membrane for processing to mature pilin. In Escherichia coli (strain K12), this protein is Protein TraQ (traQ).